The sequence spans 76 residues: Large ribosomal subunit protein bL31 (76 aa).

This sequence belongs to the bacterial ribosomal protein bL31 family. Type A subfamily. As to quaternary structure, part of the 50S ribosomal subunit.

Its function is as follows. Binds the 23S rRNA. The protein is Large ribosomal subunit protein bL31 (rpmE) of Pelagibacter ubique (strain HTCC1062).